The primary structure comprises 139 residues: Holo-[acyl-carrier-protein] synthase (139 aa).

Residues aspartate 8 and glutamate 61 each contribute to the Mg(2+) site.

It belongs to the P-Pant transferase superfamily. AcpS family. It depends on Mg(2+) as a cofactor.

The protein resides in the cytoplasm. It catalyses the reaction apo-[ACP] + CoA = holo-[ACP] + adenosine 3',5'-bisphosphate + H(+). Transfers the 4'-phosphopantetheine moiety from coenzyme A to a Ser of acyl-carrier-protein. This is Holo-[acyl-carrier-protein] synthase from Rhodopseudomonas palustris (strain BisB5).